A 94-amino-acid chain; its full sequence is Pyrimidine/purine nucleoside phosphorylase (94 aa).

This sequence belongs to the nucleoside phosphorylase PpnP family.

It catalyses the reaction a purine D-ribonucleoside + phosphate = a purine nucleobase + alpha-D-ribose 1-phosphate. It carries out the reaction adenosine + phosphate = alpha-D-ribose 1-phosphate + adenine. The catalysed reaction is cytidine + phosphate = cytosine + alpha-D-ribose 1-phosphate. The enzyme catalyses guanosine + phosphate = alpha-D-ribose 1-phosphate + guanine. It catalyses the reaction inosine + phosphate = alpha-D-ribose 1-phosphate + hypoxanthine. It carries out the reaction thymidine + phosphate = 2-deoxy-alpha-D-ribose 1-phosphate + thymine. The catalysed reaction is uridine + phosphate = alpha-D-ribose 1-phosphate + uracil. The enzyme catalyses xanthosine + phosphate = alpha-D-ribose 1-phosphate + xanthine. Catalyzes the phosphorolysis of diverse nucleosides, yielding D-ribose 1-phosphate and the respective free bases. Can use uridine, adenosine, guanosine, cytidine, thymidine, inosine and xanthosine as substrates. Also catalyzes the reverse reactions. The chain is Pyrimidine/purine nucleoside phosphorylase from Pseudomonas putida (strain GB-1).